The chain runs to 499 residues: NAD(P)H-quinone oxidoreductase chain 4, chloroplastic (499 aa).

The next 14 membrane-spanning stretches (helical) occupy residues 4–24 (FPWL…IFFL), 35–55 (YTIY…CYNF), 84–104 (GLSI…TLAA), 111–129 (SRLF…IGSF), 134–154 (LLLF…LLSV), 167–187 (FILY…GIGL), 208–228 (ALEI…LPII), 242–262 (HYST…YGLI), 272–292 (AHSI…IYAA), 305–325 (IAYS…SITD), 330–350 (GAVL…FLAG), 386–406 (LALP…GIIT), 416–436 (IVIT…SLSM), and 462–482 (LFVL…PDFV).

It belongs to the complex I subunit 4 family.

It is found in the plastid. It localises to the chloroplast thylakoid membrane. The catalysed reaction is a plastoquinone + NADH + (n+1) H(+)(in) = a plastoquinol + NAD(+) + n H(+)(out). It catalyses the reaction a plastoquinone + NADPH + (n+1) H(+)(in) = a plastoquinol + NADP(+) + n H(+)(out). The chain is NAD(P)H-quinone oxidoreductase chain 4, chloroplastic from Citrus sinensis (Sweet orange).